The primary structure comprises 461 residues: UPF0210 protein LCABL_10110 (461 aa).

Belongs to the UPF0210 family. As to quaternary structure, homodimer.

This Lacticaseibacillus casei (strain BL23) (Lactobacillus casei) protein is UPF0210 protein LCABL_10110.